Here is a 155-residue protein sequence, read N- to C-terminus: Pathogenesis-related protein A (155 aa).

This sequence belongs to the BetVI family.

This Petroselinum crispum (Parsley) protein is Pathogenesis-related protein A (PCPR1-1).